Reading from the N-terminus, the 275-residue chain is Light-independent protochlorophyllide reductase iron-sulfur ATP-binding protein (275 aa).

ATP-binding positions include 12 to 17 (GIGKST) and Lys41. Ser16 is a binding site for Mg(2+). [4Fe-4S] cluster-binding residues include Cys97 and Cys131. An ATP-binding site is contributed by 182-183 (NR).

Belongs to the NifH/BchL/ChlL family. Homodimer. Protochlorophyllide reductase is composed of three subunits; BchL, BchN and BchB. Requires [4Fe-4S] cluster as cofactor.

The enzyme catalyses chlorophyllide a + oxidized 2[4Fe-4S]-[ferredoxin] + 2 ADP + 2 phosphate = protochlorophyllide a + reduced 2[4Fe-4S]-[ferredoxin] + 2 ATP + 2 H2O. It participates in porphyrin-containing compound metabolism; bacteriochlorophyll biosynthesis (light-independent). Its function is as follows. Component of the dark-operative protochlorophyllide reductase (DPOR) that uses Mg-ATP and reduced ferredoxin to reduce ring D of protochlorophyllide (Pchlide) to form chlorophyllide a (Chlide). This reaction is light-independent. The L component serves as a unique electron donor to the NB-component of the complex, and binds Mg-ATP. This is Light-independent protochlorophyllide reductase iron-sulfur ATP-binding protein from Chlorobium phaeovibrioides (strain DSM 265 / 1930) (Prosthecochloris vibrioformis (strain DSM 265)).